The primary structure comprises 210 residues: Cytochrome c4 (210 aa).

An N-terminal signal peptide occupies residues 1–20 (MNKALVTLLLTLGITGLAHA). Residues Cys-34, Cys-37, His-38, Met-86, Cys-139, Cys-142, His-143, and Met-187 each contribute to the heme c site.

Binds 2 heme c groups covalently per subunit.

The protein localises to the periplasm. Its function is as follows. Diheme, high potential cytochrome c believed to be an intermediate electron donor to terminal oxidation systems. This is Cytochrome c4 (cycA) from Azotobacter vinelandii.